Here is a 258-residue protein sequence, read N- to C-terminus: Diacetyl reductase [(S)-acetoin forming] (258 aa).

8 to 32 (LVTGGAQGIGFKIAERLVEDGFKVA) contributes to the NAD(+) binding site. Serine 141 provides a ligand contact to substrate. Catalysis depends on tyrosine 154, which acts as the Proton acceptor. Lysine 158 is an active-site residue.

This sequence belongs to the short-chain dehydrogenases/reductases (SDR) family.

The enzyme catalyses (S)-acetoin + NAD(+) = diacetyl + NADH + H(+). Catalyzes the irreversible reduction of 2,3-butanediol to (S)-acetoin in the presence of NADH. The polypeptide is Diacetyl reductase [(S)-acetoin forming] (butA) (Staphylococcus aureus (strain Mu50 / ATCC 700699)).